Consider the following 180-residue polypeptide: ATP-dependent protease subunit HslV (180 aa).

Threonine 6 is a catalytic residue. Residues alanine 164, cysteine 167, and threonine 170 each contribute to the Na(+) site.

This sequence belongs to the peptidase T1B family. HslV subfamily. In terms of assembly, a double ring-shaped homohexamer of HslV is capped on each side by a ring-shaped HslU homohexamer. The assembly of the HslU/HslV complex is dependent on binding of ATP.

It is found in the cytoplasm. The catalysed reaction is ATP-dependent cleavage of peptide bonds with broad specificity.. Its activity is regulated as follows. Allosterically activated by HslU binding. Functionally, protease subunit of a proteasome-like degradation complex believed to be a general protein degrading machinery. The protein is ATP-dependent protease subunit HslV of Borrelia hermsii (strain HS1 / DAH).